A 236-amino-acid polypeptide reads, in one-letter code: Orotidine 5'-phosphate decarboxylase (236 aa).

Substrate is bound by residues Asp-13, Lys-35, 62–71 (DLKFYDIPQT), Thr-123, Arg-184, Gln-193, Gly-213, and Arg-214. Lys-64 functions as the Proton donor in the catalytic mechanism.

This sequence belongs to the OMP decarboxylase family. Type 1 subfamily. Homodimer.

The enzyme catalyses orotidine 5'-phosphate + H(+) = UMP + CO2. It participates in pyrimidine metabolism; UMP biosynthesis via de novo pathway; UMP from orotate: step 2/2. In terms of biological role, catalyzes the decarboxylation of orotidine 5'-monophosphate (OMP) to uridine 5'-monophosphate (UMP). The chain is Orotidine 5'-phosphate decarboxylase from Coxiella burnetii (strain CbuK_Q154) (Coxiella burnetii (strain Q154)).